A 398-amino-acid polypeptide reads, in one-letter code: Thyrotropin-releasing hormone receptor (398 aa).

Residues 1–28 are Extracellular-facing; sequence MENETVSELNQTQLQPRAVVALEYQVVT. Asn-3 and Asn-10 each carry an N-linked (GlcNAc...) asparagine glycan. Residues 29–51 traverse the membrane as a helical segment; it reads ILLVLIICGLGIVGNIMVVLVVM. The Cytoplasmic portion of the chain corresponds to 52–61; sequence RTKHMRTPTN. The chain crosses the membrane as a helical span at residues 62–83; the sequence is CYLVSLAVADLMVLVAAGLPNI. Residues 84–99 lie on the Extracellular side of the membrane; the sequence is TDSIYGSWVYGYVGCL. A disulfide bridge links Cys-98 with Cys-179. Residues 100–121 form a helical membrane-spanning segment; sequence CITYLQYLGINASSCSITAFTI. The Cytoplasmic segment spans residues 122–144; it reads ERYIAICHPIKAQFLCTFSRAKK. A helical transmembrane segment spans residues 145–168; that stretch reads IIIFVWAFTSLYCMLWFFLLDLNI. The Extracellular portion of the chain corresponds to 169 to 193; sequence STYKDAIVISCGYKISRNYYSPIYL. A helical membrane pass occupies residues 194-215; the sequence is MDFGVFYVVPMILATVLYGFIA. At 216 to 266 the chain is on the cytoplasmic side; the sequence is RILFLNPIPSDPKENSKTWKNDSTHQNTNLNVNTSNRCFNSTVSSRKQVTK. A helical transmembrane segment spans residues 267–288; sequence MLAVVVILFALLWMPYRTLVVV. Residues 289-296 lie on the Extracellular side of the membrane; that stretch reads NSFLSSPF. The helical transmembrane segment at 297–319 threads the bilayer; the sequence is QENWFLLFCRICIYLNSAINPVI. Residues 320-398 lie on the Cytoplasmic side of the membrane; the sequence is YNLMSQKFRA…LASEVSFSQS (79 aa).

It belongs to the G-protein coupled receptor 1 family.

The protein localises to the cell membrane. In terms of biological role, receptor for thyrotropin-releasing hormone (TRH). Upon ligand binding, this G-protein-coupled receptor triggers activation of the phosphatidylinositol (IP3)-calcium-protein kinase C (PKC) pathway. The polypeptide is Thyrotropin-releasing hormone receptor (TRHR) (Homo sapiens (Human)).